A 341-amino-acid polypeptide reads, in one-letter code: Ketol-acid reductoisomerase (NADP(+)) (341 aa).

The region spanning 2-182 (TDIVYDKDAD…GGLRAGGIRT (181 aa)) is the KARI N-terminal Rossmann domain. Residues 25–28 (YGSQ), K48, S51, S53, and 83–86 (DQHQ) contribute to the NADP(+) site. Residue H108 is part of the active site. Residue G134 participates in NADP(+) binding. Residues 183 to 328 (TFTEETETDL…RELRKLFAWN (146 aa)) form the KARI C-terminal knotted domain. Residues D191, E195, E227, and E231 each coordinate Mg(2+). S252 lines the substrate pocket.

The protein belongs to the ketol-acid reductoisomerase family. Mg(2+) serves as cofactor.

The enzyme catalyses (2R)-2,3-dihydroxy-3-methylbutanoate + NADP(+) = (2S)-2-acetolactate + NADPH + H(+). The catalysed reaction is (2R,3R)-2,3-dihydroxy-3-methylpentanoate + NADP(+) = (S)-2-ethyl-2-hydroxy-3-oxobutanoate + NADPH + H(+). Its pathway is amino-acid biosynthesis; L-isoleucine biosynthesis; L-isoleucine from 2-oxobutanoate: step 2/4. The protein operates within amino-acid biosynthesis; L-valine biosynthesis; L-valine from pyruvate: step 2/4. Its function is as follows. Involved in the biosynthesis of branched-chain amino acids (BCAA). Catalyzes an alkyl-migration followed by a ketol-acid reduction of (S)-2-acetolactate (S2AL) to yield (R)-2,3-dihydroxy-isovalerate. In the isomerase reaction, S2AL is rearranged via a Mg-dependent methyl migration to produce 3-hydroxy-3-methyl-2-ketobutyrate (HMKB). In the reductase reaction, this 2-ketoacid undergoes a metal-dependent reduction by NADPH to yield (R)-2,3-dihydroxy-isovalerate. In Clavibacter michiganensis subsp. michiganensis (strain NCPPB 382), this protein is Ketol-acid reductoisomerase (NADP(+)).